Here is a 218-residue protein sequence, read N- to C-terminus: Small ribosomal subunit protein uS3c (218 aa).

Residues 47 to 118 (VQKEMRISSG…RLNVVITRVA (72 aa)) enclose the KH type-2 domain.

This sequence belongs to the universal ribosomal protein uS3 family. In terms of assembly, part of the 30S ribosomal subunit.

The protein localises to the plastid. It localises to the chloroplast. The chain is Small ribosomal subunit protein uS3c (rps3) from Ceratophyllum demersum (Rigid hornwort).